The primary structure comprises 144 residues: Large ribosomal subunit protein uL15 (144 aa).

The tract at residues 1 to 53 is disordered; it reads MRLNSLSPAEGAKHSAKRLGRGIGSGLGKTGGRGHKGQKSRTGGGVRRGFEGG. Over residues 21–31 the composition is skewed to gly residues; the sequence is RGIGSGLGKTG.

This sequence belongs to the universal ribosomal protein uL15 family. In terms of assembly, part of the 50S ribosomal subunit.

In terms of biological role, binds to the 23S rRNA. The sequence is that of Large ribosomal subunit protein uL15 from Glaesserella parasuis serovar 5 (strain SH0165) (Haemophilus parasuis).